Here is a 190-residue protein sequence, read N- to C-terminus: D-glycero-beta-D-manno-heptose-1,7-bisphosphate 7-phosphatase (190 aa).

The active-site Nucleophile is Asp11. Mg(2+) contacts are provided by Asp11 and Asp13. Substrate contacts are provided by residues 11 to 13, 19 to 22, and 53 to 56; these read DRD, DHGY, and TNQS. Asp13 (proton donor) is an active-site residue. Zn(2+)-binding residues include Cys92, His94, Cys107, and Cys109. 110–111 contacts substrate; the sequence is RK. 2 residues coordinate Mg(2+): Asp136 and Lys137. Residue Lys137 coordinates substrate.

The protein belongs to the GmhB family. In terms of assembly, monomer. Requires Mg(2+) as cofactor. Zn(2+) is required as a cofactor.

The protein resides in the cytoplasm. The enzyme catalyses D-glycero-beta-D-manno-heptose 1,7-bisphosphate + H2O = D-glycero-beta-D-manno-heptose 1-phosphate + phosphate. It participates in nucleotide-sugar biosynthesis; ADP-L-glycero-beta-D-manno-heptose biosynthesis; ADP-L-glycero-beta-D-manno-heptose from D-glycero-beta-D-manno-heptose 7-phosphate: step 2/4. It functions in the pathway bacterial outer membrane biogenesis; LPS core biosynthesis. Converts the D-glycero-beta-D-manno-heptose 1,7-bisphosphate intermediate into D-glycero-beta-D-manno-heptose 1-phosphate by removing the phosphate group at the C-7 position. The polypeptide is D-glycero-beta-D-manno-heptose-1,7-bisphosphate 7-phosphatase (gmhB) (Escherichia coli O6:H1 (strain CFT073 / ATCC 700928 / UPEC)).